The primary structure comprises 327 residues: Porphobilinogen deaminase (327 aa).

Residue Cys-251 is modified to S-(dipyrrolylmethanemethyl)cysteine.

Belongs to the HMBS family. Dipyrromethane serves as cofactor.

It catalyses the reaction 4 porphobilinogen + H2O = hydroxymethylbilane + 4 NH4(+). It functions in the pathway porphyrin-containing compound metabolism; protoporphyrin-IX biosynthesis; coproporphyrinogen-III from 5-aminolevulinate: step 2/4. In terms of biological role, tetrapolymerization of the monopyrrole PBG into the hydroxymethylbilane pre-uroporphyrinogen in several discrete steps. In Kluyveromyces lactis (strain ATCC 8585 / CBS 2359 / DSM 70799 / NBRC 1267 / NRRL Y-1140 / WM37) (Yeast), this protein is Porphobilinogen deaminase (HEM3).